The sequence spans 328 residues: DNA polymerase IV (328 aa).

One can recognise a UmuC domain in the interval 6–187; that stretch reads IIHIDMDYFF…LDIGDFPGVG (182 aa). The Mg(2+) site is built by aspartate 10 and aspartate 105. Glutamate 106 is an active-site residue.

This sequence belongs to the DNA polymerase type-Y family. Monomer. Mg(2+) is required as a cofactor.

Its subcellular location is the cytoplasm. The enzyme catalyses DNA(n) + a 2'-deoxyribonucleoside 5'-triphosphate = DNA(n+1) + diphosphate. Functionally, poorly processive, error-prone DNA polymerase involved in untargeted mutagenesis. Copies undamaged DNA at stalled replication forks, which arise in vivo from mismatched or misaligned primer ends. These misaligned primers can be extended by PolIV. Exhibits no 3'-5' exonuclease (proofreading) activity. May be involved in translesional synthesis, in conjunction with the beta clamp from PolIII. The protein is DNA polymerase IV of Staphylococcus aureus (strain bovine RF122 / ET3-1).